The primary structure comprises 351 residues: UDP-N-acetylglucosamine--N-acetylmuramyl-(pentapeptide) pyrophosphoryl-undecaprenol N-acetylglucosamine transferase (351 aa).

UDP-N-acetyl-alpha-D-glucosamine is bound by residues 13-15 (TGG), Asn-125, Arg-161, Ser-189, Ile-241, 260-265 (ALTVCE), and Gln-285.

This sequence belongs to the glycosyltransferase 28 family. MurG subfamily.

It localises to the cell inner membrane. It carries out the reaction di-trans,octa-cis-undecaprenyl diphospho-N-acetyl-alpha-D-muramoyl-L-alanyl-D-glutamyl-meso-2,6-diaminopimeloyl-D-alanyl-D-alanine + UDP-N-acetyl-alpha-D-glucosamine = di-trans,octa-cis-undecaprenyl diphospho-[N-acetyl-alpha-D-glucosaminyl-(1-&gt;4)]-N-acetyl-alpha-D-muramoyl-L-alanyl-D-glutamyl-meso-2,6-diaminopimeloyl-D-alanyl-D-alanine + UDP + H(+). It functions in the pathway cell wall biogenesis; peptidoglycan biosynthesis. In terms of biological role, cell wall formation. Catalyzes the transfer of a GlcNAc subunit on undecaprenyl-pyrophosphoryl-MurNAc-pentapeptide (lipid intermediate I) to form undecaprenyl-pyrophosphoryl-MurNAc-(pentapeptide)GlcNAc (lipid intermediate II). The sequence is that of UDP-N-acetylglucosamine--N-acetylmuramyl-(pentapeptide) pyrophosphoryl-undecaprenol N-acetylglucosamine transferase from Haemophilus influenzae (strain ATCC 51907 / DSM 11121 / KW20 / Rd).